Here is a 271-residue protein sequence, read N- to C-terminus: Protein-L-isoaspartate O-methyltransferase (271 aa).

Pro residues predominate over residues 1–15 (MRKPVTPPGNPPRPR). The tract at residues 1-60 (MRKPVTPPGNPPRPRSPGYGSTSLAPGITAANSNTRISPPTLARPAPAAGAGGQGGNLGL) is disordered. Low complexity predominate over residues 39 to 49 (PPTLARPAPAA). Residue Ser119 is part of the active site.

It belongs to the methyltransferase superfamily. L-isoaspartyl/D-aspartyl protein methyltransferase family.

It localises to the cytoplasm. It catalyses the reaction [protein]-L-isoaspartate + S-adenosyl-L-methionine = [protein]-L-isoaspartate alpha-methyl ester + S-adenosyl-L-homocysteine. Its function is as follows. Catalyzes the methyl esterification of L-isoaspartyl residues in peptides and proteins that result from spontaneous decomposition of normal L-aspartyl and L-asparaginyl residues. It plays a role in the repair and/or degradation of damaged proteins. The chain is Protein-L-isoaspartate O-methyltransferase from Bordetella petrii (strain ATCC BAA-461 / DSM 12804 / CCUG 43448).